The primary structure comprises 490 residues: Cytochrome P450 2C28 (490 aa).

Ser127 carries the post-translational modification Phosphoserine. N6-acetyllysine is present on residues Lys249 and Lys375. Cys435 lines the heme pocket.

This sequence belongs to the cytochrome P450 family. Heme serves as cofactor. As to expression, liver.

It is found in the endoplasmic reticulum membrane. It localises to the microsome membrane. It catalyses the reaction an organic molecule + reduced [NADPH--hemoprotein reductase] + O2 = an alcohol + oxidized [NADPH--hemoprotein reductase] + H2O + H(+). Functionally, catalyzes the N-demethylation of aminopyrine and benzphetamine, but does not catalyze the hydroxylation of tolbutamide, testosterone, and progesterone. This is Cytochrome P450 2C28 (CYP2C28) from Mesocricetus auratus (Golden hamster).